The primary structure comprises 348 residues: MVDPIYVEVADMFLKRYKDYVINLFKEPVPLNRVQKLLQENKFAGELFDMSNRLCTMYENGTWHSQVLETLDLDKIYANVDMMPLEDDSQYSDNLVKELLRYFKQDFFTWCNKPVCKSCGASGDDINGAAIQAPTNEEAKFNCGSVEVYHCQKCNSEVRFPRYNDPIKLLETRTGRCGEWCNLFTLVLKSFGLESRYIWNREDHVWCEYYSPYLKRWIHVDSCEQSFDEPFIYSKNWNKSMSYCIGFWRYGVVDVSKRYILQNQLPRDIIKEDDLQFLCHALTKRLRTGLSDDESYKMYCRDDLEQLELNPSATPTKEMQKLKISKTGNKGRISGSAEWKESRGENGK.

Zn(2+) contacts are provided by Cys116, Cys119, Cys151, and Cys154. Cys177 (nucleophile) is an active-site residue. Active-site residues include His204 and Asp221. Glu224 is a substrate binding site. Residues 311–348 (PSATPTKEMQKLKISKTGNKGRISGSAEWKESRGENGK) are disordered. A compositionally biased stretch (basic and acidic residues) spans 338 to 348 (EWKESRGENGK).

Belongs to the transglutaminase-like superfamily. PNGase family. It depends on Zn(2+) as a cofactor.

The protein resides in the cytoplasm. The catalysed reaction is Hydrolysis of an N(4)-(acetyl-beta-D-glucosaminyl)asparagine residue in which the glucosamine residue may be further glycosylated, to yield a (substituted) N-acetyl-beta-D-glucosaminylamine and a peptide containing an aspartate residue.. In terms of biological role, specifically deglycosylates the denatured form of N-linked glycoproteins in the cytoplasm and assists their proteasome-mediated degradation. Cleaves the beta-aspartyl-glucosamine (GlcNAc) of the glycan and the amide side chain of Asn, converting Asn to Asp. Prefers proteins containing high-mannose over those bearing complex type oligosaccharides. Can recognize misfolded proteins in the endoplasmic reticulum that are exported to the cytosol to be destroyed and deglycosylate them, while it has no activity toward native proteins. Deglycosylation is a prerequisite for subsequent proteasome-mediated degradation of some, but not all, misfolded glycoproteins. This Candida glabrata (strain ATCC 2001 / BCRC 20586 / JCM 3761 / NBRC 0622 / NRRL Y-65 / CBS 138) (Yeast) protein is Peptide-N(4)-(N-acetyl-beta-glucosaminyl)asparagine amidase (PNG1).